A 510-amino-acid polypeptide reads, in one-letter code: UDP-N-acetylmuramate--L-alanine ligase (510 aa).

The interval 1 to 25 is disordered; sequence MVETVGGKDAVAPAPARSPSPPAKN. ATP is bound at residue 140–146; that stretch reads GTHGKTT.

Belongs to the MurCDEF family.

It is found in the cytoplasm. It catalyses the reaction UDP-N-acetyl-alpha-D-muramate + L-alanine + ATP = UDP-N-acetyl-alpha-D-muramoyl-L-alanine + ADP + phosphate + H(+). It functions in the pathway cell wall biogenesis; peptidoglycan biosynthesis. Cell wall formation. The polypeptide is UDP-N-acetylmuramate--L-alanine ligase (Synechococcus sp. (strain JA-3-3Ab) (Cyanobacteria bacterium Yellowstone A-Prime)).